A 344-amino-acid polypeptide reads, in one-letter code: Ribosome biogenesis protein RPF2 (344 aa).

Residues 28–243 (KQALFIPGQS…IGRIHTPSPD (216 aa)) enclose the Brix domain. The residue at position 73 (serine 73) is a Phosphoserine. Residues 291-344 (KGLKSKFDQGTEEGDGEVDEDYEDEASYSDDGQEYEEEFVSATDIEPSAKRQKK) are disordered. Acidic residues predominate over residues 300 to 329 (GTEEGDGEVDEDYEDEASYSDDGQEYEEEF).

This sequence belongs to the RPF2 family. In terms of assembly, part of a complex that includes BRX1, RPF1, RPF2 and SSF1 or SSF2. Component of a hexameric 5S RNP precursor complex, composed of 5S RNA, RRS1, RPF2, RPL5, RPL11A/RPL11B and SYO1; this complex acts as a precursor for ribosome assembly.

The protein resides in the nucleus. The protein localises to the nucleolus. Its function is as follows. Required for biogenesis of the 60S ribosomal subunit. In Saccharomyces cerevisiae (strain ATCC 204508 / S288c) (Baker's yeast), this protein is Ribosome biogenesis protein RPF2 (RPF2).